Here is a 126-residue protein sequence, read N- to C-terminus: Holo-[acyl-carrier-protein] synthase (126 aa).

Mg(2+) contacts are provided by aspartate 8 and glutamate 56.

Belongs to the P-Pant transferase superfamily. AcpS family. It depends on Mg(2+) as a cofactor.

The protein localises to the cytoplasm. The catalysed reaction is apo-[ACP] + CoA = holo-[ACP] + adenosine 3',5'-bisphosphate + H(+). Functionally, transfers the 4'-phosphopantetheine moiety from coenzyme A to a Ser of acyl-carrier-protein. This chain is Holo-[acyl-carrier-protein] synthase, found in Clostridium tetani (strain Massachusetts / E88).